Reading from the N-terminus, the 158-residue chain is Large ribosomal subunit protein uL11 (158 aa).

A disordered region spans residues 1–28; sequence MAGTIEALVPGGQATPGPPLGPELGPTP.

This sequence belongs to the universal ribosomal protein uL11 family. Part of the ribosomal stalk of the 50S ribosomal subunit. Interacts with L10 and the large rRNA to form the base of the stalk. L10 forms an elongated spine to which L12 dimers bind in a sequential fashion forming a multimeric L10(L12)X complex.

Functionally, forms part of the ribosomal stalk which helps the ribosome interact with GTP-bound translation factors. The polypeptide is Large ribosomal subunit protein uL11 (Halorubrum lacusprofundi (strain ATCC 49239 / DSM 5036 / JCM 8891 / ACAM 34)).